The primary structure comprises 185 residues: Ribosome-recycling factor (185 aa).

It belongs to the RRF family.

It localises to the cytoplasm. In terms of biological role, responsible for the release of ribosomes from messenger RNA at the termination of protein biosynthesis. May increase the efficiency of translation by recycling ribosomes from one round of translation to another. This Desulfatibacillum aliphaticivorans protein is Ribosome-recycling factor.